A 256-amino-acid chain; its full sequence is NSGLVYRDMSGGINEAFSDIAGEAAEYFMRGNVDWIVGADIFKSSGGLRYFDQPSRDGRSIDHASQYYSGIDVHSSGVFNRAFYLLANKSGWNVRKGFEVFAVANQLYWTPNSTFDQGGCGVVKAAQDLNYNTADVVAAFNTVGVNASCGTTPPPVGKVLEKGKPITGLSGSRGGEDFYTFTVTNSGSVVVSISGGTGDADLYVKAGSKPTTSSWDCRPYRSGNAEQCSISAVVGTTYHVMLRGYSNYSGVTLRLD.

The active-site Proton donor is the His74.

The protein belongs to the peptidase M4 family. Zn(2+) serves as cofactor.

It is found in the secreted. Its function is as follows. May play a role in ulcer formation. Proteolytic digestion of gastric mucus has been suggested as an important mechanism by which its pathogenicity is at least partly exerted. This chain is Zinc metalloprotease (hap), found in Helicobacter pylori (Campylobacter pylori).